Reading from the N-terminus, the 221-residue chain is SIN3-HDAC complex-associated factor (221 aa).

Over residues 112 to 121 (QKEFKRHNSD) the composition is skewed to basic and acidic residues. 2 disordered regions span residues 112 to 152 (QKEF…MASG) and 201 to 221 (AAAEKPEEQGPEPLPISTQEW). Over residues 124–135 (STTSSASPAQSP) the composition is skewed to low complexity. Residues 136 to 152 (CYSNQSDDGSDTEMASG) show a composition bias toward polar residues.

This sequence belongs to the SINHCAF family. As to quaternary structure, interacts with the Sin3/HDAC corepressor complex at least composed of BRMS1, BRMS1L, ING2, SAP30, SAP30L and HDAC1. Found in a complex composed of at least SINHCAF, SIN3A, HDAC1, SAP30, RBBP4, OGT and TET1. Interacts with SIN3A and OGT.

It localises to the nucleus. Functionally, subunit of the Sin3 deacetylase complex (Sin3/HDAC), this subunit is important for the repression of genes encoding components of the TGF-beta signaling pathway. Core component of a SIN3A complex (composed of at least SINHCAF, SIN3A, HDAC1, SAP30, RBBP4, OGT and TET1) present in embryonic stem (ES) cells. Promotes the stability of SIN3A and its presence on chromatin and is essential for maintaining the potential of ES cells to proliferate rapidly, while ensuring a short G1-phase of the cell cycle, thereby preventing premature lineage priming. The protein is SIN3-HDAC complex-associated factor of Homo sapiens (Human).